The sequence spans 236 residues: Adenosine 5'-phosphosulfate reductase (236 aa).

4 residues coordinate [4Fe-4S] cluster: Cys-123, Cys-124, Cys-206, and Cys-209. Cys-232 serves as the catalytic Nucleophile; cysteine thiosulfonate intermediate.

It belongs to the PAPS reductase family. CysH subfamily. Requires [4Fe-4S] cluster as cofactor.

The protein resides in the cytoplasm. It carries out the reaction [thioredoxin]-disulfide + sulfite + AMP + 2 H(+) = adenosine 5'-phosphosulfate + [thioredoxin]-dithiol. Its pathway is sulfur metabolism; hydrogen sulfide biosynthesis; sulfite from sulfate. Catalyzes the formation of sulfite from adenosine 5'-phosphosulfate (APS) using thioredoxin as an electron donor. This Streptomyces coelicolor (strain ATCC BAA-471 / A3(2) / M145) protein is Adenosine 5'-phosphosulfate reductase.